Consider the following 457-residue polypeptide: Cystathionine beta-lyase (457 aa).

Residues 1 to 41 form a disordered region; sequence MSTPNSDSPAAQAAKKVFSRLDLDGHNLPPSPAPSSPHNGR.

Belongs to the trans-sulfuration enzymes family. The cofactor is pyridoxal 5'-phosphate.

It is found in the cytoplasm. Its subcellular location is the nucleus. It catalyses the reaction L,L-cystathionine + H2O = L-homocysteine + pyruvate + NH4(+). The catalysed reaction is an S-substituted L-cysteine + H2O = a thiol + pyruvate + NH4(+). The protein operates within amino-acid biosynthesis; L-methionine biosynthesis via de novo pathway; L-homocysteine from L-cystathionine: step 1/1. In terms of biological role, involved in de novo synthesis of methionine. This Neurospora crassa (strain ATCC 24698 / 74-OR23-1A / CBS 708.71 / DSM 1257 / FGSC 987) protein is Cystathionine beta-lyase (met-2).